An 864-amino-acid chain; its full sequence is uncharacterized protein (864 aa).

This is an uncharacterized protein from Rickettsia typhi (strain ATCC VR-144 / Wilmington).